A 272-amino-acid polypeptide reads, in one-letter code: Small ribosomal subunit protein mS23 (272 aa).

The segment at 236–272 (AGATGGAKEESDPAILPELEVAESTSESAQPAEIRTG) is disordered.

Belongs to the mitochondrion-specific ribosomal protein mS23 family. As to quaternary structure, component of the mitochondrial small ribosomal subunit.

It is found in the mitochondrion. This is Small ribosomal subunit protein mS23 (RSM25) from Coccidioides immitis (strain RS) (Valley fever fungus).